Reading from the N-terminus, the 183-residue chain is Bifunctional protein PyrR (183 aa).

The PRPP-binding signature appears at 102-114; that stretch reads VVLVDDVLFSGRT.

The protein belongs to the purine/pyrimidine phosphoribosyltransferase family. PyrR subfamily.

The catalysed reaction is UMP + diphosphate = 5-phospho-alpha-D-ribose 1-diphosphate + uracil. In terms of biological role, regulates the transcription of the pyrimidine nucleotide (pyr) operon in response to exogenous pyrimidines. Also displays a weak uracil phosphoribosyltransferase activity which is not physiologically significant. In Leifsonia xyli subsp. xyli (strain CTCB07), this protein is Bifunctional protein PyrR.